Reading from the N-terminus, the 238-residue chain is Probable RNA/DNA demethylase ALKBH6 (238 aa).

In terms of domain architecture, Fe2OG dioxygenase spans 96–227; the sequence is PANHVLVNQY…RVSLTIRRVP (132 aa). Positions 103 and 105 each coordinate 2-oxoglutarate. The Fe cation site is built by H114 and D116. The disordered stretch occupies residues 138 to 161; sequence YEPRRPEDDDPTEQPRPPPRPTTS. Fe cation is bound at residue H182. The 2-oxoglutarate site is built by R218 and S220.

This sequence belongs to the alkB family. In terms of assembly, interacts with VCPKMT. It depends on Fe(2+) as a cofactor. As to expression, widely expressed, with highest expression in testis and pancreas.

Its subcellular location is the cytoplasm. The protein localises to the nucleus. Functionally, probable Fe(2+)/2-oxoglutarate-dependent dioxygenase involved in oxidative demethylation of nucleic acids. Binds nucleic acids with a preference for ssDNA or ssRNA to other types of DNAs. May play a role in nucleic acid damage repair. The chain is Probable RNA/DNA demethylase ALKBH6 from Homo sapiens (Human).